Here is a 438-residue protein sequence, read N- to C-terminus: Putative hydroxypyruvate reductase (438 aa).

It catalyses the reaction (R)-glycerate + NAD(+) = 3-hydroxypyruvate + NADH + H(+). It carries out the reaction (R)-glycerate + NADP(+) = 3-hydroxypyruvate + NADPH + H(+). The protein operates within carbohydrate acid metabolism; tartrate degradation; 3-hydroxypyruvate from D-glycerate: step 1/1. Its function is as follows. Degrades an unidentified toxic product from the first step of tartrate degradation. The polypeptide is Putative hydroxypyruvate reductase (ttuD) (Agrobacterium vitis (Rhizobium vitis)).